A 1364-amino-acid polypeptide reads, in one-letter code: Pleckstrin homology domain-containing family H member 1 (1364 aa).

Residues 28–169 adopt a coiled-coil conformation; sequence FRLQASKIRE…VGSLQDALEA (142 aa). Disordered stretches follow at residues 184–266, 296–321, 356–395, 487–529, and 546–568; these read GAAE…SPPH, GTKT…PGTP, LHPS…ESPK, PFMD…IKRG, and DACS…SSYS. Positions 237-246 are enriched in polar residues; sequence EDSSSSTVHS. The segment covering 364-379 has biased composition (basic and acidic residues); the sequence is LESRARSREEPEKMEM. The segment covering 509-520 has biased composition (polar residues); that stretch reads VPSSESRKTSGL. 2 PH domains span residues 578-672 and 687-796; these read SLEK…SLLK and KPTV…VAAG. A Phosphoserine modification is found at S745. The 155-residue stretch at 832–986 folds into the MyTH4 domain; that stretch reads YSKDGLYASL…PSRMEVVSIL (155 aa). Residues 997-1333 enclose the FERM domain; it reads FSIPVHFTNG…NHCTTTVNPP (337 aa).

In Homo sapiens (Human), this protein is Pleckstrin homology domain-containing family H member 1 (PLEKHH1).